A 717-amino-acid polypeptide reads, in one-letter code: Ribosomal RNA large subunit methyltransferase K/L (717 aa).

In terms of domain architecture, THUMP spans 44–155; it reads DAYKVCIYSY…KQFVNVFLCL (112 aa).

It belongs to the methyltransferase superfamily. RlmKL family.

The protein localises to the cytoplasm. It carries out the reaction guanosine(2445) in 23S rRNA + S-adenosyl-L-methionine = N(2)-methylguanosine(2445) in 23S rRNA + S-adenosyl-L-homocysteine + H(+). The catalysed reaction is guanosine(2069) in 23S rRNA + S-adenosyl-L-methionine = N(2)-methylguanosine(2069) in 23S rRNA + S-adenosyl-L-homocysteine + H(+). Specifically methylates the guanine in position 2445 (m2G2445) and the guanine in position 2069 (m7G2069) of 23S rRNA. In Francisella tularensis subsp. holarctica (strain FTNF002-00 / FTA), this protein is Ribosomal RNA large subunit methyltransferase K/L.